The following is a 994-amino-acid chain: Glycine dehydrogenase (decarboxylating) (994 aa).

Positions 1–20 (MTDHAENRCGLEGPRPFSSR) are disordered. Lys-716 is subject to N6-(pyridoxal phosphate)lysine.

Belongs to the GcvP family. In terms of assembly, the glycine cleavage system is composed of four proteins: P, T, L and H. The cofactor is pyridoxal 5'-phosphate.

It carries out the reaction N(6)-[(R)-lipoyl]-L-lysyl-[glycine-cleavage complex H protein] + glycine + H(+) = N(6)-[(R)-S(8)-aminomethyldihydrolipoyl]-L-lysyl-[glycine-cleavage complex H protein] + CO2. Its function is as follows. The glycine cleavage system catalyzes the degradation of glycine. The P protein binds the alpha-amino group of glycine through its pyridoxal phosphate cofactor; CO(2) is released and the remaining methylamine moiety is then transferred to the lipoamide cofactor of the H protein. This is Glycine dehydrogenase (decarboxylating) from Cutibacterium acnes (strain DSM 16379 / KPA171202) (Propionibacterium acnes).